A 61-amino-acid polypeptide reads, in one-letter code: Hepcidin (61 aa).

A disordered region spans residues 1–24; sequence LQVLTEEVGSIDSPVGEHQQPGGE. The propeptide occupies 1–34; sequence LQVLTEEVGSIDSPVGEHQQPGGESMRLPEHFRF. 4 disulfide bridges follow: cysteine 43–cysteine 59, cysteine 46–cysteine 49, cysteine 47–residue 55, and cysteine 50–cysteine 58.

The protein belongs to the hepcidin family.

It localises to the secreted. Functionally, seems to act as a signaling molecule involved in the maintenance of iron homeostasis. Seems to be required in conjunction with HFE to regulate both intestinal iron absorption and iron storage in macrophages. May also have antimicrobial activity. This is Hepcidin (hamp) from Oncorhynchus mykiss (Rainbow trout).